The sequence spans 878 residues: NUT family member 2A (878 aa).

Disordered stretches follow at residues 273–324 (WSQG…DDSC), 417–566 (QKSQ…LSYT), 627–757 (KEKQ…EEEE), and 775–878 (WLPQ…RCSQ). Pro residues-rich tracts occupy residues 278–288 (PLPPPPPPAAQ) and 427–444 (CLPP…PPAP). Residues 476-487 (TKARRPPPRPHR) are compositionally biased toward basic residues. Positions 537-551 (EPEKQREEGEVKQPQ) are enriched in basic and acidic residues.

This sequence belongs to the NUT family.

This chain is NUT family member 2A (NUTM2A), found in Homo sapiens (Human).